Consider the following 304-residue polypeptide: Insulin-like growth factor 1 receptor (304 aa).

2 Fibronectin type-III domains span residues 1 to 43 (ERTV…TMPA) and 49 to 142 (IPGP…VQAK). At 1-147 (ERTVISNLRP…YVQAKTTYEN (147 aa)) the chain is on the extracellular side. N-linked (GlcNAc...) asparagine glycosylation is found at N115 and N128. Residues 148 to 168 (FIHLIIALPVAVLLIVGGLVI) form a helical membrane-spanning segment. Residues 169 to 304 (MLYVFHRKRN…HMNGGRKNER (136 aa)) lie on the Cytoplasmic side of the membrane. S225 is subject to Phosphoserine; by GSK3-beta. A Phosphoserine modification is found at S229. The interval 231–304 (ENKPPEPEEL…HMNGGRKNER (74 aa)) is disordered. Acidic residues predominate over residues 237–246 (PEELDLEPEN). Residues 247-263 (MESVPLDPSASSSSLPL) are compositionally biased toward low complexity. A compositionally biased stretch (basic and acidic residues) spans 264–273 (PDRHSGHKAE).

Belongs to the protein kinase superfamily. Tyr protein kinase family. Insulin receptor subfamily. Tetramer of 2 alpha and 2 beta chains linked by disulfide bonds. The alpha chains contribute to the formation of the ligand-binding domain, while the beta chain carries the kinase domain. Forms a hybrid receptor with INSR, the hybrid is a tetramer consisting of 1 alpha chain and 1 beta chain of INSR and 1 alpha chain and 1 beta chain of IGF1R. Interacts with ARRB1 and ARRB2. Interacts with GRB10. Interacts with RACK1. Interacts with SOCS1, SOCS2 and SOCS3. Interacts with 14-3-3 proteins. Interacts with NMD2. Interacts with MAP3K5. Interacts with STAT3. Found in a ternary complex with IGF1 and ITGAV:ITGB3 or ITGA6:ITGB4. Interacts (nascent precursor form) with ZFAND2B. In terms of processing, autophosphorylated on tyrosine residues in response to ligand binding. Autophosphorylation occurs in trans, i.e. one subunit of the dimeric receptor phosphorylates tyrosine residues on the other subunit. Autophosphorylation occurs in a sequential manner. While every single phosphorylation increases kinase activity, all three tyrosine residues in the kinase activation loop have to be phosphorylated for optimal activity. Can be autophosphorylated at additional tyrosine residues (in vitro). May also be phosphorylated at tyrosine residues by mTORC2. Autophosphorylated is followed by phosphorylation of juxtamembrane tyrosines and C-terminal serines. Phosphorylation of Ser-225 by GSK-3beta restrains kinase activity and promotes cell surface expression, it requires a priming phosphorylation at Ser-229. Dephosphorylated by PTPN1. Post-translationally, polyubiquitinated in the activation loop through both 'Lys-48' and 'Lys-29' linkages, promoting receptor endocytosis and subsequent degradation by the proteasome. Ubiquitination is facilitated by pre-existing phosphorylation. Sumoylated with SUMO1. In terms of processing, controlled by regulated intramembrane proteolysis (RIP). Undergoes metalloprotease-dependent constitutive ectodomain shedding to produce a membrane-anchored 52 kDa C-Terminal fragment which is further processed by presenilin gamma-secretase to yield an intracellular 50 kDa fragment.

It is found in the cell membrane. It carries out the reaction L-tyrosyl-[protein] + ATP = O-phospho-L-tyrosyl-[protein] + ADP + H(+). Its activity is regulated as follows. Activated by autophosphorylation at tyrosines in the kinase activation loop; phosphorylation at all three tyrosine residues is required for optimal kinase activity. Inhibited by MSC1609119A-1, BMS-754807, PQIP, benzimidazole pyridinone, isoquinolinedione, bis-azaindole, 3-cyanoquinoline, 2,4-bis-arylamino-1,3-pyrimidine, pyrrolopyrimidine, pyrrole-5-carboxaldehyde, picropodophyllin (PPP), tyrphostin derivatives. While most inhibitors bind to the ATP binding pocket, MSC1609119A-1 functions as allosteric inhibitor and binds close to the DFG motif and the activation loop. Functionally, receptor tyrosine kinase which mediates actions of insulin-like growth factor 1 (IGF1). Binds IGF1 with high affinity and IGF2 and insulin (INS) with a lower affinity. The activated IGF1R is involved in cell growth and survival control. IGF1R is crucial for tumor transformation and survival of malignant cell. Ligand binding activates the receptor kinase, leading to receptor autophosphorylation, and tyrosines phosphorylation of multiple substrates, that function as signaling adapter proteins including, the insulin-receptor substrates (IRS1/2), Shc and 14-3-3 proteins. Phosphorylation of IRSs proteins lead to the activation of two main signaling pathways: the PI3K-AKT/PKB pathway and the Ras-MAPK pathway. The result of activating the MAPK pathway is increased cellular proliferation, whereas activating the PI3K pathway inhibits apoptosis and stimulates protein synthesis. Phosphorylated IRS1 can activate the 85 kDa regulatory subunit of PI3K (PIK3R1), leading to activation of several downstream substrates, including protein AKT/PKB. AKT phosphorylation, in turn, enhances protein synthesis through mTOR activation and triggers the antiapoptotic effects of IGFIR through phosphorylation and inactivation of BAD. In parallel to PI3K-driven signaling, recruitment of Grb2/SOS by phosphorylated IRS1 or Shc leads to recruitment of Ras and activation of the ras-MAPK pathway. In addition to these two main signaling pathways IGF1R signals also through the Janus kinase/signal transducer and activator of transcription pathway (JAK/STAT). Phosphorylation of JAK proteins can lead to phosphorylation/activation of signal transducers and activators of transcription (STAT) proteins. In particular activation of STAT3, may be essential for the transforming activity of IGF1R. The JAK/STAT pathway activates gene transcription and may be responsible for the transforming activity. JNK kinases can also be activated by the IGF1R. IGF1 exerts inhibiting activities on JNK activation via phosphorylation and inhibition of MAP3K5/ASK1, which is able to directly associate with the IGF1R. When present in a hybrid receptor with INSR, binds IGF1. This chain is Insulin-like growth factor 1 receptor (IGF1R), found in Sus scrofa (Pig).